The sequence spans 171 residues: Large ribosomal subunit protein uL10 (171 aa).

Belongs to the universal ribosomal protein uL10 family. In terms of assembly, part of the ribosomal stalk of the 50S ribosomal subunit. The N-terminus interacts with L11 and the large rRNA to form the base of the stalk. The C-terminus forms an elongated spine to which L12 dimers bind in a sequential fashion forming a multimeric L10(L12)X complex.

Forms part of the ribosomal stalk, playing a central role in the interaction of the ribosome with GTP-bound translation factors. The protein is Large ribosomal subunit protein uL10 of Sphingopyxis alaskensis (strain DSM 13593 / LMG 18877 / RB2256) (Sphingomonas alaskensis).